Consider the following 269-residue polypeptide: ParA family protein MG470 (269 aa).

This sequence belongs to the ParA family.

The protein is ParA family protein MG470 of Mycoplasma genitalium (strain ATCC 33530 / DSM 19775 / NCTC 10195 / G37) (Mycoplasmoides genitalium).